The chain runs to 430 residues: 3-phosphoshikimate 1-carboxyvinyltransferase (430 aa).

3 residues coordinate 3-phosphoshikimate: Lys-23, Ser-24, and Arg-28. A phosphoenolpyruvate-binding site is contributed by Lys-23. Residues Gly-95 and Arg-123 each coordinate phosphoenolpyruvate. 3-phosphoshikimate contacts are provided by Ser-169, Gln-171, Asp-315, and Lys-342. Residue Gln-171 participates in phosphoenolpyruvate binding. Asp-315 functions as the Proton acceptor in the catalytic mechanism. The phosphoenolpyruvate site is built by Arg-346 and Arg-388.

It belongs to the EPSP synthase family. In terms of assembly, monomer.

It localises to the cytoplasm. The enzyme catalyses 3-phosphoshikimate + phosphoenolpyruvate = 5-O-(1-carboxyvinyl)-3-phosphoshikimate + phosphate. It participates in metabolic intermediate biosynthesis; chorismate biosynthesis; chorismate from D-erythrose 4-phosphate and phosphoenolpyruvate: step 6/7. Catalyzes the transfer of the enolpyruvyl moiety of phosphoenolpyruvate (PEP) to the 5-hydroxyl of shikimate-3-phosphate (S3P) to produce enolpyruvyl shikimate-3-phosphate and inorganic phosphate. In Streptococcus pyogenes serotype M3 (strain ATCC BAA-595 / MGAS315), this protein is 3-phosphoshikimate 1-carboxyvinyltransferase.